Consider the following 110-residue polypeptide: MHGPKPTVQEIVLELCPYNEIQPVDLVCHEQLGDSDDEIDEPDHAVNHHQHLLLARRDEQQRHRIQCLCCKCNKALQLVVEASRDNLRTLQQLFMDSLNFVCPWCATETQ.

The E7 terminal domain stretch occupies residues 1–47; it reads MHGPKPTVQEIVLELCPYNEIQPVDLVCHEQLGDSDDEIDEPDHAVN. The LXCXE motif; interaction with host RB1 and TMEM173/STING signature appears at 26–30; the sequence is LVCHE. The segment at 69–105 is a zinc-finger region; the sequence is CCKCNKALQLVVEASRDNLRTLQQLFMDSLNFVCPWC. The short motif at 87 to 95 is the Nuclear export signal element; it reads LRTLQQLFM.

The protein belongs to the papillomaviridae E7 protein family. In terms of assembly, homodimer. Homooligomer. Interacts with host RB1; this interaction induces dissociation of RB1-E2F1 complex thereby disrupting RB1 activity. Interacts with host EP300; this interaction represses EP300 transcriptional activity. Interacts with protein E2; this interaction inhibits E7 oncogenic activity. Interacts with host TMEM173/STING; this interaction impairs the ability of TMEM173/STING to sense cytosolic DNA and promote the production of type I interferon (IFN-alpha and IFN-beta). In terms of processing, highly phosphorylated.

Its subcellular location is the host cytoplasm. It localises to the host nucleus. In terms of biological role, plays a role in viral genome replication by driving entry of quiescent cells into the cell cycle. Stimulation of progression from G1 to S phase allows the virus to efficiently use the cellular DNA replicating machinery to achieve viral genome replication. E7 protein has both transforming and trans-activating activities. Induces the disassembly of the E2F1 transcription factor from RB1, with subsequent transcriptional activation of E2F1-regulated S-phase genes. Interferes with host histone deacetylation mediated by HDAC1 and HDAC2, leading to transcription activation. Also plays a role in the inhibition of both antiviral and antiproliferative functions of host interferon alpha. Interaction with host TMEM173/STING impairs the ability of TMEM173/STING to sense cytosolic DNA and promote the production of type I interferon (IFN-alpha and IFN-beta). This chain is Protein E7, found in Human papillomavirus 68.